The primary structure comprises 382 residues: uncharacterized protein (382 aa).

The next 12 helical transmembrane spans lie at 14 to 34, 45 to 65, 79 to 99, 102 to 122, 131 to 151, 157 to 177, 204 to 224, 235 to 255, 270 to 290, 291 to 311, 325 to 345, and 348 to 368; these read GLLL…LWLA, VVSS…GYVI, FIFA…SWLA, FVAG…LMCS, LLAA…LLVS, LMSV…PLLF, LGVN…GLMP, ASIG…QWPI, VQVF…AMAP, ALFI…AWAC, ALLL…AMLM, and FSDN…LLML.

This sequence belongs to the major facilitator superfamily. YcaD (TC 2.A.1.26) family.

The protein localises to the cell inner membrane. This is an uncharacterized protein from Escherichia coli (strain K12 / MC4100 / BW2952).